The primary structure comprises 122 residues: Large ribosomal subunit protein uL14c (122 aa).

The protein belongs to the universal ribosomal protein uL14 family. As to quaternary structure, part of the 50S ribosomal subunit.

The protein localises to the plastid. It localises to the chloroplast. Functionally, binds to 23S rRNA. This chain is Large ribosomal subunit protein uL14c (rpl14), found in Bigelowiella natans (Pedinomonas minutissima).